The following is a 430-amino-acid chain: tRNA(Ile)-lysidine synthase (430 aa).

21-26 is a binding site for ATP; sequence SGGLDS.

The protein belongs to the tRNA(Ile)-lysidine synthase family.

It is found in the cytoplasm. It carries out the reaction cytidine(34) in tRNA(Ile2) + L-lysine + ATP = lysidine(34) in tRNA(Ile2) + AMP + diphosphate + H(+). Functionally, ligates lysine onto the cytidine present at position 34 of the AUA codon-specific tRNA(Ile) that contains the anticodon CAU, in an ATP-dependent manner. Cytidine is converted to lysidine, thus changing the amino acid specificity of the tRNA from methionine to isoleucine. The chain is tRNA(Ile)-lysidine synthase from Salmonella typhi.